Consider the following 179-residue polypeptide: MSSLSCGTAVCVVCLEKPKYRCPACRVPYCSLPCFRKHKAPPLQQLPVCPLRLGACCCFIEQCRPAAGPVEKKIRSALTAKTKKPVENEGSLDDDDSVADFLNSDEEEDRVSLQNLKNLGESAALRSLLLNPHLRQLMVDLDQADDKAKLMRACMQEPLFVEFADCCLSIVEPSQNEDP.

8 residues coordinate Zn(2+): Cys11, Cys14, Cys22, Cys25, Cys30, Cys34, His38, and Cys49. The segment at 11–49 (CVVCLEKPKYRCPACRVPYCSLPCFRKHKAPPLQQLPVC) adopts an HIT-type zinc-finger fold. Residue Ser104 is modified to Phosphoserine.

Thyroid receptor interacting proteins (TRIPs) specifically interact with the ligand binding domain of the thyroid receptor (TR). Requires the presence of thyroid hormone for its interaction. Interacts with NUFIP1. Interacts (via HIT-type zinc finger) with the RUVBL1/RUVBL2 complex in the presence of ADP.

The protein resides in the cytoplasm. It localises to the nucleus. This Bos taurus (Bovine) protein is Zinc finger HIT domain-containing protein 3 (ZNHIT3).